A 92-amino-acid polypeptide reads, in one-letter code: Small ribosomal subunit protein uS19 (92 aa).

It belongs to the universal ribosomal protein uS19 family.

Protein S19 forms a complex with S13 that binds strongly to the 16S ribosomal RNA. The sequence is that of Small ribosomal subunit protein uS19 from Shewanella amazonensis (strain ATCC BAA-1098 / SB2B).